The chain runs to 385 residues: MKLVRKDIEKDNAGQVTLVPEEPEDMWHTFNLVQVGDSLRASTIRKVQTESSTGSVGSNRVRTTLTLCVEAIDFDSQACQLRVKGTNIQENEYVKMGAYHTIELEPNRQFTLAKKQWDSVVLERIEQACDPAWSADVAAVVMQEGLAHVCLVTPSMTLTRAKVEVNIPRKRKGNCSQHDRALERFYEQVVQAIQRHINFEVVKCVLVASPGFVREQFCDYMFQQAVKTDNKVLLENRSKFLQVHASSGHKYSLKEALCDPTVASRLSDTKAAGEVKALDDFYKMLQHEPDRAFYGLKQVERANEALAIDTLLISDELFRHQDVATRSRYVRLVDSVKENAGTVRIFSSLHVSGEQLGQLTGVAAILRFPVPELSDQEDDSSSEED.

Residue Lys-162 forms a Glycyl lysine isopeptide (Lys-Gly) (interchain with G-Cter in SUMO2) linkage. Residues Ser-374, Ser-380, Ser-381, and Ser-382 each carry the phosphoserine modification.

Belongs to the eukaryotic release factor 1 family. Pelota subfamily. As to quaternary structure, component of the Pelota-HBS1L complex, also named Dom34-Hbs1 complex, composed of PELO and HBS1L. Interacts with PINK1. Interacts with ABCE1. Interacts with CNOT4. A divalent metal cation serves as cofactor. As to expression, ubiquitously expressed.

The protein resides in the cytoplasm. Component of the Pelota-HBS1L complex, a complex that recognizes stalled ribosomes and triggers the No-Go Decay (NGD) pathway. In the Pelota-HBS1L complex, PELO recognizes ribosomes stalled at the 3' end of an mRNA and engages stalled ribosomes by destabilizing mRNA in the mRNA channel. Following mRNA extraction from stalled ribosomes by the SKI complex, the Pelota-HBS1L complex promotes recruitment of ABCE1, which drives the disassembly of stalled ribosomes, followed by degradation of damaged mRNAs as part of the NGD pathway. As part of the PINK1-regulated signaling, upon mitochondrial damage is recruited to the ribosome/mRNA-ribonucleoprotein complex associated to mitochondrial outer membrane thereby enabling the recruitment of autophagy receptors and induction of mitophagy. The sequence is that of Protein pelota homolog from Mus musculus (Mouse).